We begin with the raw amino-acid sequence, 182 residues long: Large ribosomal subunit protein bL19m (182 aa).

The transit peptide at 1 to 21 (MFNAKHFFNLGLGFQWLQKRG) directs the protein to the mitochondrion.

Belongs to the bacterial ribosomal protein bL19 family. As to quaternary structure, component of the mitochondrial large ribosomal subunit (mt-LSU). Mature yeast 74S mitochondrial ribosomes consist of a small (37S) and a large (54S) subunit. The 37S small subunit contains a 15S ribosomal RNA (15S mt-rRNA) and at least 32 different proteins. The 54S large subunit contains a 21S rRNA (21S mt-rRNA) and at least 45 different proteins.

The protein resides in the mitochondrion. In terms of biological role, component of the mitochondrial ribosome (mitoribosome), a dedicated translation machinery responsible for the synthesis of mitochondrial genome-encoded proteins, including at least some of the essential transmembrane subunits of the mitochondrial respiratory chain. The mitoribosomes are attached to the mitochondrial inner membrane and translation products are cotranslationally integrated into the membrane. bL19m is essential for respiration. This Schizosaccharomyces pombe (strain 972 / ATCC 24843) (Fission yeast) protein is Large ribosomal subunit protein bL19m (img1).